A 91-amino-acid chain; its full sequence is MAHKKAGGSTRNGRDSEAKRLGVKMYGGQAIIPGNIIVRQRGTQFHAGYGVGMGKDHTLFAKVEGVIKFQVKGAFGRRYVSIVPKTEVSAA.

It belongs to the bacterial ribosomal protein bL27 family.

In Pseudomonas savastanoi pv. phaseolicola (strain 1448A / Race 6) (Pseudomonas syringae pv. phaseolicola (strain 1448A / Race 6)), this protein is Large ribosomal subunit protein bL27.